Here is a 374-residue protein sequence, read N- to C-terminus: Anhydro-N-acetylmuramic acid kinase (374 aa).

12-19 (GTSLDGVD) lines the ATP pocket.

This sequence belongs to the anhydro-N-acetylmuramic acid kinase family.

The enzyme catalyses 1,6-anhydro-N-acetyl-beta-muramate + ATP + H2O = N-acetyl-D-muramate 6-phosphate + ADP + H(+). The protein operates within amino-sugar metabolism; 1,6-anhydro-N-acetylmuramate degradation. Its pathway is cell wall biogenesis; peptidoglycan recycling. Catalyzes the specific phosphorylation of 1,6-anhydro-N-acetylmuramic acid (anhMurNAc) with the simultaneous cleavage of the 1,6-anhydro ring, generating MurNAc-6-P. Is required for the utilization of anhMurNAc either imported from the medium or derived from its own cell wall murein, and thus plays a role in cell wall recycling. In Salmonella arizonae (strain ATCC BAA-731 / CDC346-86 / RSK2980), this protein is Anhydro-N-acetylmuramic acid kinase.